We begin with the raw amino-acid sequence, 740 residues long: MAKRHKHYNARGGGKSKSKKSKPHGESRQRKNHRGGTSINRNRSELLLGGGDLMNPHQVEDYYFGSTAKKSSLRSGGFRPGRLTEADELDTGRLPSRKRPVEFIKAKELYDPSHDLILKLVKKNQHFDEPNSDGYNSSQSVSLREEEQDGEDEQQDVDTQEIPSKNTTVKIRSDNVVSENGDSESNSSANDAELFYVDMEGEEKTADNYIKTVDVDVQERSLKLNDCTEFQPTLRVGNVELNLKDGGSGSIEVDKPKSSYHPFHSYIQNVMENVQNYDSDDDFDENGNDVEQSFSISSDYEFESSEELITTGGTIEQFDSSMKSLTIEEIPGKTITASLTTKDISQGNSDNSSGDESFGFCEDDFEGSIGKVFVSNIRIGAGTHSYHVSCHEIYGDSEPRWVDDEMMNEIIAEMGLPEHRFRAYYKHLHKSFIEEEEEPEEYADIPFDDDDSDDSTADQCEPFAEDDLGEDLDDLVSYALKYNKQRKIEYHTTSLDIRGKGRNKHLIFDQTAGMDEDIKLMLQNKFATRQINKTKKRRAKEDFLSQSHASSTDLLMKYPYGLHIQNIKDEFDAFYRNDRQSITFPPLDPHGNKIIGKFAYNYFMKASNIGKGKSTKVYVEKTKKTRFNKPAYHIISQLLRKRPVFMRIDQKAPTDTQSTFNRTVRLKVSKENFNISEGQIVGEDAPEIGIDNIGRRMLEKLGWNIGQGLGAHGNQGINEPILAKVKKNKSGLRHTSENQQ.

Basic residues predominate over residues 1-22 (MAKRHKHYNARGGGKSKSKKSK). Disordered regions lie at residues 1–52 (MAKR…GGGD), 67–93 (TAKK…DTGR), 126–191 (HFDE…SAND), and 435–464 (EEEE…EPFA). A compositionally biased stretch (polar residues) spans 133 to 142 (DGYNSSQSVS). The segment covering 146–159 (EEQDGEDEQQDVDT) has biased composition (acidic residues). Over residues 162 to 190 (IPSKNTTVKIRSDNVVSENGDSESNSSAN) the composition is skewed to polar residues. The span at 435–456 (EEEEPEEYADIPFDDDDSDDST) shows a compositional bias: acidic residues. The R3H domain occupies 561-623 (GLHIQNIKDE…STKVYVEKTK (63 aa)). Positions 690–737 (IDNIGRRMLEKLGWNIGQGLGAHGNQGINEPILAKVKKNKSGLRHTSE) constitute a G-patch domain.

This sequence belongs to the SQS1 family.

It is found in the cytoplasm. The protein resides in the nucleus. Its function is as follows. May be involved in splicing. The protein is Protein SQS1 (SQS1) of Kluyveromyces lactis (strain ATCC 8585 / CBS 2359 / DSM 70799 / NBRC 1267 / NRRL Y-1140 / WM37) (Yeast).